An 89-amino-acid polypeptide reads, in one-letter code: MTILGSISSIGNVKSITKSNNLSSLSNSSSSTQSMNSIQCGGGCGNGGLLGGVGGLVGGVLVGTGVIIGSVLHGVGSILTGGSNNCGCN.

Belongs to the hssA/B family.

This Dictyostelium discoideum (Social amoeba) protein is HssA/B-like protein 22 (hssl22).